A 472-amino-acid polypeptide reads, in one-letter code: MARVSSLLSFCLTLLILFHGYAAQQGQQGQQFPNECQLDQLNALEPSHVLKSEAGRIEVWDHHAPQLRCSGVSFARYIIESKGLYLPSFFNTAKLSFVAKGRGLMGKVIPGCAETFQDSSEFQPRFEGQGQSQRFRDMHQKVEHIRSGDTIATTPGVAQWFYNDGQEPLVIVSVFDLASHQNQLDRNPRPFYLAGNNPQGQVWLQGREQQPQKNIFNGFGPEVIAQALKIDLQTAQQLQNQDDNRGNIVRVQGPFGVIRPPLRGQRPQEEEEEEGRHGRHGNGLEETICSARCTDNLDDPSRADVYKPQLGYISTLNSYDLPILRFIRLSALRGSIRQNAMVLPQWNANANAILYVTDGEAQIQIVNDNGNRVFDGQVSQGQLIAVPQGFSVVKRATSNRFQWVEFKTNANAQINTLAGRTSVLRGLPLEVITNGFQISPEEARRVKFNTLETTLTHSSGPASYGRPRVAAA.

Residues 1 to 24 form the signal peptide; the sequence is MARVSSLLSFCLTLLILFHGYAAQ. 2 cysteine pairs are disulfide-bonded: cysteine 36-cysteine 69 and cysteine 112-cysteine 289. Residues 41–236 enclose the Cupin type-1 1 domain; the sequence is LNALEPSHVL…ALKIDLQTAQ (196 aa). Residue threonine 115 is modified to Phosphothreonine. Residues 259 to 283 form a disordered region; sequence RPPLRGQRPQEEEEEEGRHGRHGNG. A Cupin type-1 2 domain is found at 295–444; sequence DNLDDPSRAD…GFQISPEEAR (150 aa). A Phosphotyrosine modification is found at tyrosine 312. Serine 314 is subject to Phosphoserine. Phosphothreonine occurs at positions 408 and 433.

This sequence belongs to the 11S seed storage protein (globulins) family. As to quaternary structure, hexamer; each subunit is composed of an acidic and a basic chain derived from a single precursor and linked by a disulfide bond. In terms of processing, phosphorylated in seeds on some Tyr residues in response to abscisic acid (ABA). Proteolytically processed during seed maturation at a conserved Asn-Gly peptide bond by an asparaginyl endopeptidase to produce two mature polypeptides referred to as alpha and beta subunits that are joined together by a disulfide bond. In terms of tissue distribution, accumulates in seeds 8 days after anthesis.

The protein resides in the protein storage vacuole. Its function is as follows. Seed storage protein. The polypeptide is 12S seed storage protein CRA1 (CRA1) (Arabidopsis thaliana (Mouse-ear cress)).